The chain runs to 81 residues: MRFLALTSLLCILLLCLSFFSAEGRRHPRNPAKPGKIRICCPRLPGPDLMPQKGHHMRICRPCKFKQKPQLWVVPGALPQV.

Residues 1–24 (MRFLALTSLLCILLLCLSFFSAEG) form the signal peptide. Cystine bridges form between cysteine 40/cysteine 63 and cysteine 41/cysteine 60.

As to quaternary structure, interacts with SUSD2; the interaction is direct.

It localises to the secreted. Functionally, highly cationic protein that has multiple functions. Acts as a chemotactic factor that mediates lymphocytes recruitment to epithelia through binding and activation of the G-protein coupled receptor GPR15. May be a tumor suppressor; together with SUSD2 has a growth inhibitory effect on colon cancer cells which includes G1 cell cycle arrest. May regulate keratinocyte proliferation. In addition, through activation of Mas-related G protein-coupled receptors (MRGPRs) contributes to pruritogenesis by activating itch-selective sensory neurons and mast cells degranulation. Its function is as follows. Has antimicrobial activity against Gram-positive bacteria, including Staphylococcus aureus and Actinomyces spec., and Mycoplasma hominis and lentivirus. The polypeptide is Protein GPR15LG (GPR15LG) (Sus scrofa (Pig)).